Here is a 76-residue protein sequence, read N- to C-terminus: MKMYRLGDVIIKVYENQQELESSKLEGCRSLCPNKMGKPVAVEIICPSCKPKEGEWLFCHFINQLNDFKLVMDKVV.

This is an uncharacterized protein from Acidianus bottle-shaped virus (isolate Italy/Pozzuoli) (ABV).